The following is a 409-amino-acid chain: Microfibrillar-associated protein 3-like (409 aa).

Positions 1-28 (MGLLKSHLTVCLPPSVPFLILVSTLATA) are cleaved as a signal peptide. Over 29-148 (KSVTNSTLNG…TLRVIFTSGD (120 aa)) the chain is Extracellular. 5 N-linked (GlcNAc...) asparagine glycosylation sites follow: Asn33, Asn37, Asn67, Asn111, and Asn135. The region spanning 47–141 (PVIIARTDHI…GTINNTVTLR (95 aa)) is the Ig-like C2-type domain. Cys68 and Cys125 are disulfide-bonded. The helical transmembrane segment at 149–169 (MGVYYMVVCLVAFTIVMILNI) threads the bilayer. Topologically, residues 170-409 (TRLCMMSSHL…NTCIIYESHV (240 aa)) are cytoplasmic. At Tyr287 the chain carries Phosphotyrosine. Residues Ser298, Ser303, Ser306, and Ser307 each carry the phosphoserine modification. The disordered stretch occupies residues 319–392 (VSVHPQSKKD…LPPAHLETTE (74 aa)). The segment covering 333–348 (QEGENLEVKDEEETEP) has biased composition (acidic residues). Residues 362–372 (DITTTELTSEE) show a composition bias toward polar residues.

It is found in the cell membrane. The protein resides in the nucleus. Its subcellular location is the cytoplasm. Its function is as follows. May participate in the nuclear signaling of EGFR and MAPK1/ERK2. This is Microfibrillar-associated protein 3-like (Mfap3l) from Rattus norvegicus (Rat).